Reading from the N-terminus, the 339-residue chain is tRNA-specific 2-thiouridylase MnmA (339 aa).

ATP contacts are provided by residues A6–S13 and M32. The Nucleophile role is filled by C92. The cysteines at positions 92 and 186 are disulfide-linked. Residue G116 participates in ATP binding. The interaction with tRNA stretch occupies residues K134–Q136. Catalysis depends on C186, which acts as the Cysteine persulfide intermediate. The segment at R288–Y289 is interaction with tRNA.

The protein belongs to the MnmA/TRMU family.

It is found in the cytoplasm. The catalysed reaction is S-sulfanyl-L-cysteinyl-[protein] + uridine(34) in tRNA + AH2 + ATP = 2-thiouridine(34) in tRNA + L-cysteinyl-[protein] + A + AMP + diphosphate + H(+). In terms of biological role, catalyzes the 2-thiolation of uridine at the wobble position (U34) of tRNA, leading to the formation of s(2)U34. The chain is tRNA-specific 2-thiouridylase MnmA from Campylobacter curvus (strain 525.92).